A 228-amino-acid chain; its full sequence is uncharacterized protein (228 aa).

The N-terminal stretch at 1-23 (MIRHTRLLLASLCLIATGARASA) is a signal peptide.

This is an uncharacterized protein from Methylorubrum extorquens (strain ATCC 14718 / DSM 1338 / JCM 2805 / NCIMB 9133 / AM1) (Methylobacterium extorquens).